The chain runs to 418 residues: Bifunctional enzyme IspD/IspF (418 aa).

The tract at residues 1-261 (MADTPALIPQ…EFKRASDMNF (261 aa)) is 2-C-methyl-D-erythritol 4-phosphate cytidylyltransferase. The tract at residues 262–418 (RIGEGWDIHA…RATVLLRKFI (157 aa)) is 2-C-methyl-D-erythritol 2,4-cyclodiphosphate synthase. Residues Asp-268 and His-270 each contribute to the a divalent metal cation site. 4-CDP-2-C-methyl-D-erythritol 2-phosphate is bound by residues 268–270 (DIH) and 294–295 (HS). His-302 contributes to the a divalent metal cation binding site. 4-CDP-2-C-methyl-D-erythritol 2-phosphate is bound by residues 316 to 318 (DIG) and 321 to 325 (FPDTD).

The protein in the N-terminal section; belongs to the IspD/TarI cytidylyltransferase family. IspD subfamily. This sequence in the C-terminal section; belongs to the IspF family. Requires a divalent metal cation as cofactor.

The catalysed reaction is 2-C-methyl-D-erythritol 4-phosphate + CTP + H(+) = 4-CDP-2-C-methyl-D-erythritol + diphosphate. The enzyme catalyses 4-CDP-2-C-methyl-D-erythritol 2-phosphate = 2-C-methyl-D-erythritol 2,4-cyclic diphosphate + CMP. It functions in the pathway isoprenoid biosynthesis; isopentenyl diphosphate biosynthesis via DXP pathway; isopentenyl diphosphate from 1-deoxy-D-xylulose 5-phosphate: step 2/6. Its pathway is isoprenoid biosynthesis; isopentenyl diphosphate biosynthesis via DXP pathway; isopentenyl diphosphate from 1-deoxy-D-xylulose 5-phosphate: step 4/6. In terms of biological role, bifunctional enzyme that catalyzes the formation of 4-diphosphocytidyl-2-C-methyl-D-erythritol from CTP and 2-C-methyl-D-erythritol 4-phosphate (MEP) (IspD), and catalyzes the conversion of 4-diphosphocytidyl-2-C-methyl-D-erythritol 2-phosphate (CDP-ME2P) to 2-C-methyl-D-erythritol 2,4-cyclodiphosphate (ME-CPP) with a corresponding release of cytidine 5-monophosphate (CMP) (IspF). This Albidiferax ferrireducens (strain ATCC BAA-621 / DSM 15236 / T118) (Rhodoferax ferrireducens) protein is Bifunctional enzyme IspD/IspF.